The chain runs to 498 residues: Glutamyl-tRNA(Gln) amidotransferase subunit A (498 aa).

Catalysis depends on charge relay system residues Lys-79 and Ser-154. Ser-178 (acyl-ester intermediate) is an active-site residue.

Belongs to the amidase family. GatA subfamily. In terms of assembly, heterotrimer of A, B and C subunits.

It carries out the reaction L-glutamyl-tRNA(Gln) + L-glutamine + ATP + H2O = L-glutaminyl-tRNA(Gln) + L-glutamate + ADP + phosphate + H(+). Its function is as follows. Allows the formation of correctly charged Gln-tRNA(Gln) through the transamidation of misacylated Glu-tRNA(Gln) in organisms which lack glutaminyl-tRNA synthetase. The reaction takes place in the presence of glutamine and ATP through an activated gamma-phospho-Glu-tRNA(Gln). The chain is Glutamyl-tRNA(Gln) amidotransferase subunit A from Psychrobacter cryohalolentis (strain ATCC BAA-1226 / DSM 17306 / VKM B-2378 / K5).